We begin with the raw amino-acid sequence, 89 residues long: Small ribosomal subunit protein uS17 (89 aa).

It belongs to the universal ribosomal protein uS17 family. Part of the 30S ribosomal subunit.

Functionally, one of the primary rRNA binding proteins, it binds specifically to the 5'-end of 16S ribosomal RNA. This is Small ribosomal subunit protein uS17 from Delftia acidovorans (strain DSM 14801 / SPH-1).